The primary structure comprises 204 residues: Protein C (204 aa).

A disordered region spans residues 1–78 (MPSFLRGILK…TEQSQRRPKI (78 aa)). The segment covering 10-20 (KPKERHHENKN) has biased composition (basic and acidic residues). The segment covering 25 to 34 (SSDSLTSSYP) has biased composition (low complexity).

This sequence belongs to the respirovirus protein C family.

The polypeptide is Protein C (P/V/C) (Homo sapiens (Human)).